The following is a 25-amino-acid chain: Panurgine K (25 aa).

Disulfide bonds link Cys-8–Cys-23 and Cys-11–Cys-19.

It is found in the target cell membrane. The protein resides in the secreted. Antimicrobial peptide active against Gram-positive bacteria M.luteus (MIC=1.6 uM) and B.subtilis (MIC=3.3 uM). Less active against Gram-negative bacteria E.coli (MIC=63.3 uM) and yeast C.albicans (MIC=24.2 uM). Not active against S.aureus and P.aeruginosa. Has no hemolytic activity against human erythrocytes. Probably acts by disrupting membranes of target cells. The protein is Panurgine K of Panurgus calcaratus (Solitary bee).